The primary structure comprises 121 residues: Flagellar protein FliT (121 aa).

The interval 1–50 (MNHAPHLYFAWQQLVEKSQLMLRLATEEQWDELIASEMAYVNAVQEIAHL) is required for homodimerization. Residues 60 to 98 (MQEQLRPMLRLILDNESKVKQLLQIRMDELAKLVGQSSV) form a fliD binding region.

It belongs to the FliT family. Homodimer. Interacts with FliD and FlhC.

Its subcellular location is the cytoplasm. It is found in the cytosol. Dual-function protein that regulates the transcription of class 2 flagellar operons and that also acts as an export chaperone for the filament-capping protein FliD. As a transcriptional regulator, acts as an anti-FlhDC factor; it directly binds FlhC, thus inhibiting the binding of the FlhC/FlhD complex to class 2 promoters, resulting in decreased expression of class 2 flagellar operons. As a chaperone, effects FliD transition to the membrane by preventing its premature polymerization, and by directing it to the export apparatus. In Escherichia coli O8 (strain IAI1), this protein is Flagellar protein FliT.